The sequence spans 335 residues: Glutamyl-tRNA reductase (335 aa).

Substrate contacts are provided by residues Thr-60–Arg-63, Ser-110, Glu-115–Glu-117, and Gln-121. The active-site Nucleophile is Cys-61. Gly-189–Asn-194 is an NADP(+) binding site.

It belongs to the glutamyl-tRNA reductase family. Homodimer.

It carries out the reaction (S)-4-amino-5-oxopentanoate + tRNA(Glu) + NADP(+) = L-glutamyl-tRNA(Glu) + NADPH + H(+). Its pathway is porphyrin-containing compound metabolism; protoporphyrin-IX biosynthesis; 5-aminolevulinate from L-glutamyl-tRNA(Glu): step 1/2. Catalyzes the NADPH-dependent reduction of glutamyl-tRNA(Glu) to glutamate 1-semialdehyde (GSA). In Chlamydia trachomatis serovar A (strain ATCC VR-571B / DSM 19440 / HAR-13), this protein is Glutamyl-tRNA reductase.